The sequence spans 160 residues: uncharacterized protein (160 aa).

Residues 27-47 (VMNSYFIAGCGPAVCYYAVSW) traverse the membrane as a helical segment.

The protein localises to the membrane. This is an uncharacterized protein from Homo sapiens (Human).